The primary structure comprises 212 residues: Ribosomal RNA small subunit methyltransferase G (212 aa).

Residues Gly-80, Leu-85, 131-132 (AE), and Arg-146 each bind S-adenosyl-L-methionine.

This sequence belongs to the methyltransferase superfamily. RNA methyltransferase RsmG family.

Its subcellular location is the cytoplasm. It carries out the reaction guanosine(527) in 16S rRNA + S-adenosyl-L-methionine = N(7)-methylguanosine(527) in 16S rRNA + S-adenosyl-L-homocysteine. Its function is as follows. Specifically methylates the N7 position of guanine in position 527 of 16S rRNA. This Stenotrophomonas maltophilia (strain R551-3) protein is Ribosomal RNA small subunit methyltransferase G.